Consider the following 565-residue polypeptide: Dihydroxy-acid dehydratase (565 aa).

Cys-53 provides a ligand contact to [2Fe-2S] cluster. Asp-85 is a Mg(2+) binding site. A [2Fe-2S] cluster-binding site is contributed by Cys-126. The Mg(2+) site is built by Asp-127 and Lys-128. The residue at position 128 (Lys-128) is an N6-carboxylysine. Residue Cys-198 participates in [2Fe-2S] cluster binding. Glu-450 is a binding site for Mg(2+). Ser-476 acts as the Proton acceptor in catalysis.

This sequence belongs to the IlvD/Edd family. As to quaternary structure, homodimer. It depends on [2Fe-2S] cluster as a cofactor. The cofactor is Mg(2+).

The catalysed reaction is (2R)-2,3-dihydroxy-3-methylbutanoate = 3-methyl-2-oxobutanoate + H2O. It carries out the reaction (2R,3R)-2,3-dihydroxy-3-methylpentanoate = (S)-3-methyl-2-oxopentanoate + H2O. The protein operates within amino-acid biosynthesis; L-isoleucine biosynthesis; L-isoleucine from 2-oxobutanoate: step 3/4. It participates in amino-acid biosynthesis; L-valine biosynthesis; L-valine from pyruvate: step 3/4. Its function is as follows. Functions in the biosynthesis of branched-chain amino acids. Catalyzes the dehydration of (2R,3R)-2,3-dihydroxy-3-methylpentanoate (2,3-dihydroxy-3-methylvalerate) into 2-oxo-3-methylpentanoate (2-oxo-3-methylvalerate) and of (2R)-2,3-dihydroxy-3-methylbutanoate (2,3-dihydroxyisovalerate) into 2-oxo-3-methylbutanoate (2-oxoisovalerate), the penultimate precursor to L-isoleucine and L-valine, respectively. This chain is Dihydroxy-acid dehydratase, found in Synechococcus sp. (strain JA-3-3Ab) (Cyanobacteria bacterium Yellowstone A-Prime).